The chain runs to 188 residues: GMP synthase [glutamine-hydrolyzing] subunit A (188 aa).

Residues 1 to 188 (MIVIMDNGGQ…RNFAKLCGEL (188 aa)) form the Glutamine amidotransferase type-1 domain. C78 (nucleophile) is an active-site residue. Catalysis depends on residues H165 and E167.

Heterodimer composed of a glutamine amidotransferase subunit (A) and a GMP-binding subunit (B).

It catalyses the reaction XMP + L-glutamine + ATP + H2O = GMP + L-glutamate + AMP + diphosphate + 2 H(+). The protein operates within purine metabolism; GMP biosynthesis; GMP from XMP (L-Gln route): step 1/1. Its function is as follows. Catalyzes the synthesis of GMP from XMP. In Pyrococcus abyssi (strain GE5 / Orsay), this protein is GMP synthase [glutamine-hydrolyzing] subunit A.